The sequence spans 444 residues: MKGVENTLSQSESVNRGYNGWMGMESETSARATHSSEQMISLEEYVREMLPMHLQKLLMERIIEAEQTGAAHTSVFAAPTGVAAQYPAMGPPMLPGQTFSSRSFAEGLVVGQLSVIVVLIFFIKFFIFSDGPAKTGGGGGSSAESRSSGFTGSPLTSTTSRLLSTLIKRGGKEGTEFAEDSENERTRQINAILEKTYYDVETHSPESLDWFNVLIAQTIQKFREEALQKDNIVHSLNDFISRKSSQLPNYLDAVKITELDIGDDFPIFSNCRIKYSPPLNKKRLEAKIDIDLSDRLTLGIETRLLMNYPKYLTASLPVKLTVSMLRFQACLTVSLTTAEEFVPTMAATTDTDAGDSEGHYLVFSFSPDYRMEFDIKSLIGARSKLENIPKISSLVEYQIKKWFMDRCVEPRFQFVKLPSMWPRSKNTREEKSDMQEEDPSRAPE.

A compositionally biased stretch (polar residues) spans 1 to 16 (MKGVENTLSQSESVNR). The tract at residues 1–20 (MKGVENTLSQSESVNRGYNG) is disordered. The Lumenal segment spans residues 1-107 (MKGVENTLSQ…TFSSRSFAEG (107 aa)). The chain crosses the membrane as a helical span at residues 108 to 128 (LVVGQLSVIVVLIFFIKFFIF). At 129-444 (SDGPAKTGGG…QEEDPSRAPE (316 aa)) the chain is on the cytoplasmic side. The interval 136–157 (GGGGGSSAESRSSGFTGSPLTS) is disordered. Positions 142–157 (SAESRSSGFTGSPLTS) are enriched in low complexity. One can recognise an SMP-LTD domain in the interval 204–418 (SPESLDWFNV…EPRFQFVKLP (215 aa)). The interval 425–444 (KNTREEKSDMQEEDPSRAPE) is disordered. The span at 426 to 444 (NTREEKSDMQEEDPSRAPE) shows a compositional bias: basic and acidic residues.

It belongs to the MMM1 family. Homodimer. Component of the ER-mitochondria encounter structure (ERMES) or MDM complex, composed of MMM1, MDM10, MDM12 and MDM34. An MMM1 homodimer associates with one molecule of MDM12 on each side in a pairwise head-to-tail manner, and the SMP-LTD domains of MMM1 and MDM12 generate a continuous hydrophobic tunnel for phospholipid trafficking.

The protein resides in the endoplasmic reticulum membrane. Its function is as follows. Component of the ERMES/MDM complex, which serves as a molecular tether to connect the endoplasmic reticulum (ER) and mitochondria. Components of this complex are involved in the control of mitochondrial shape and protein biogenesis, and function in nonvesicular lipid trafficking between the ER and mitochondria. The MDM12-MMM1 subcomplex functions in the major beta-barrel assembly pathway that is responsible for biogenesis of all outer membrane beta-barrel proteins, and acts in a late step after the SAM complex. The MDM10-MDM12-MMM1 subcomplex further acts in the TOM40-specific pathway after the action of the MDM12-MMM1 complex. Essential for establishing and maintaining the structure of mitochondria and maintenance of mtDNA nucleoids. This is Maintenance of mitochondrial morphology protein 1 from Eremothecium gossypii (strain ATCC 10895 / CBS 109.51 / FGSC 9923 / NRRL Y-1056) (Yeast).